Consider the following 171-residue polypeptide: Large ribosomal subunit protein bL9 (171 aa).

Belongs to the bacterial ribosomal protein bL9 family.

Its function is as follows. Binds to the 23S rRNA. This Rickettsia felis (strain ATCC VR-1525 / URRWXCal2) (Rickettsia azadi) protein is Large ribosomal subunit protein bL9.